Reading from the N-terminus, the 252-residue chain is Imidazole glycerol phosphate synthase subunit HisF (252 aa).

Residues D11 and D130 contribute to the active site.

The protein belongs to the HisA/HisF family. As to quaternary structure, heterodimer of HisH and HisF.

Its subcellular location is the cytoplasm. It carries out the reaction 5-[(5-phospho-1-deoxy-D-ribulos-1-ylimino)methylamino]-1-(5-phospho-beta-D-ribosyl)imidazole-4-carboxamide + L-glutamine = D-erythro-1-(imidazol-4-yl)glycerol 3-phosphate + 5-amino-1-(5-phospho-beta-D-ribosyl)imidazole-4-carboxamide + L-glutamate + H(+). It functions in the pathway amino-acid biosynthesis; L-histidine biosynthesis; L-histidine from 5-phospho-alpha-D-ribose 1-diphosphate: step 5/9. In terms of biological role, IGPS catalyzes the conversion of PRFAR and glutamine to IGP, AICAR and glutamate. The HisF subunit catalyzes the cyclization activity that produces IGP and AICAR from PRFAR using the ammonia provided by the HisH subunit. This chain is Imidazole glycerol phosphate synthase subunit HisF, found in Geobacillus thermodenitrificans (strain NG80-2).